The chain runs to 164 residues: DNA-directed RNA polymerase 19 kDa subunit (164 aa).

The segment covering 1 to 35 (MADTDDIIDYESDDLTEYEDDEEEEEDGESLETSD) has biased composition (acidic residues). Residues 1-39 (MADTDDIIDYESDDLTEYEDDEEEEEDGESLETSDIDPK) form a disordered region.

It belongs to the poxviridae DNA-directed RNA polymerase 19 kDa subunit family. In terms of assembly, the DNA-dependent RNA polymerase used for intermediate and late genes expression consists of eight subunits Rpo30/OPG66, Rpo7/OPG90, Rpo22/OPG103, Rpo147/OPG105, Rpo18/OPG119, Rpo19/OPG131, Rpo132/OPG151 and Rpo35/OPG156. The same holoenzyme, with the addition of the transcription-specificity factor OPG109, is used for early gene expression.

The protein resides in the virion. The enzyme catalyses RNA(n) + a ribonucleoside 5'-triphosphate = RNA(n+1) + diphosphate. Part of the DNA-dependent RNA polymerase which catalyzes the transcription of viral DNA into RNA using the four ribonucleoside triphosphates as substrates. Responsible for the transcription of early, intermediate and late genes. DNA-dependent RNA polymerase associates with the early transcription factor (ETF), itself composed of OPG118 and OPG133, thereby allowing the early genes transcription. Late transcription, and probably also intermediate transcription, require newly synthesized RNA polymerase. This is DNA-directed RNA polymerase 19 kDa subunit (OPG131) from Homo sapiens (Human).